We begin with the raw amino-acid sequence, 218 residues long: Insulin-induced gene 2 protein (218 aa).

Residues 1 to 21 (MGDRENVSYGSRPILAQKMNL) lie on the Cytoplasmic side of the membrane. A helical transmembrane segment spans residues 22 to 44 (LLRGFLLFLIGVFLALVLNLLQV). At 45–63 (QRNVTLFPPDVLSSLFSSA) the chain is on the lumenal side. Residues 64–81 (WWVPLCCGTAAAAIGLLY) form a helical membrane-spanning segment. Residues 82–96 (PCIDRHLGEPHKFKR) lie on the Cytoplasmic side of the membrane. A helical transmembrane segment spans residues 97–119 (EWSSVMRCVAVFVGINHASAKVD). The Lumenal segment spans residues 120–122 (FAN). A helical transmembrane segment spans residues 123–141 (NMQLSLTLAALSIGLWWTF). Over 142–146 (DRSRS) the chain is Cytoplasmic. A helical membrane pass occupies residues 147–168 (GLGLGIGISFFATLVSQLLVYN). The Lumenal segment spans residues 169-182 (GVYEYTAPDFLYVR). Residues 183–200 (SWLPCIFFAGGITMGNIG) traverse the membrane as a helical segment. Residues 201 to 218 (RQLEMYERKALVEKSHRD) lie on the Cytoplasmic side of the membrane. The short motif at 212 to 218 (VEKSHRD) is the KxHxx element.

This sequence belongs to the INSIG family. As to quaternary structure, interacts with scap; interaction is direct and only takes place in the presence of sterols; it prevents interaction between scap and the coat protein complex II (COPII). Associates with the SCAP-SREBP complex; association is mediated via its interaction with scap and only takes place in the presence of sterols.

It localises to the endoplasmic reticulum membrane. Its function is as follows. Oxysterol-binding protein that mediates feedback control of cholesterol synthesis by controlling both endoplasmic reticulum to Golgi transport of scap and degradation of hmgcr. Acts as a negative regulator of cholesterol biosynthesis by mediating the retention of the SCAP-SREBP complex in the endoplasmic reticulum, thereby blocking the processing of sterol regulatory element-binding proteins (SREBPs). Binds oxysterol, including 22-hydroxycholesterol, 24-hydroxycholesterol, 25-hydroxycholesterol and 27-hydroxycholesterol, regulating interaction with scap and retention of the SCAP-SREBP complex in the endoplasmic reticulum. In presence of oxysterol, interacts with scap, retaining the SCAP-SREBP complex in the endoplasmic reticulum, thereby preventing scap from escorting SREBPs to the Golgi. Sterol deprivation reduce oxysterol-binding, disrupting the interaction between insig2 and scap, thereby promoting Golgi transport of the SCAP-SREBP complex, followed by processing and nuclear translocation of SREBPs. Also regulates cholesterol synthesis by regulating degradation of hmgcr. In Xenopus laevis (African clawed frog), this protein is Insulin-induced gene 2 protein.